A 66-amino-acid polypeptide reads, in one-letter code: Jindongenin-1a (66 aa).

The N-terminal stretch at 1–22 (MFTLKKPLLLLFFLGTVSLSLC) is a signal peptide. Residues 23 to 40 (EQERAADDDEGEVIEEEV) constitute a propeptide that is removed on maturation. Residues C60 and C66 are joined by a disulfide bond.

In terms of tissue distribution, expressed by the skin glands.

It localises to the secreted. In terms of biological role, displays broad-spectrum antibacterial activity against a range of Gram-positive and Gram-negative bacteria. Also displays antifungal activity against C.albicans ATCC 2002. Has low hemolytic activity, low cytotoxicity and low antioxidant activity. The polypeptide is Jindongenin-1a (Amolops jingdongensis (Chinese torrent frog)).